Reading from the N-terminus, the 148-residue chain is MASKRILKELKDLQKDPPSNCSAGPVAEDMFHWQATIMGPPESPYAGGVFLVSIHFPPDYPFKPPKVSFKTKVYHPNINSNGSICLDILKEQWSPALTISKVLLSICSLLTDPNPDDPLVPEIAHMYKTDRSKYESTARSWTQKYAMG.

The region spanning 1 to 147 is the UBC core domain; the sequence is MASKRILKEL…ARSWTQKYAM (147 aa). Cys85 functions as the Glycyl thioester intermediate in the catalytic mechanism.

It belongs to the ubiquitin-conjugating enzyme family. Interacts with the E3 ubiquitin-protein ligases MBR1 and MBR2. In terms of tissue distribution, ubiquitously expressed. Mainly in petals.

The catalysed reaction is S-ubiquitinyl-[E1 ubiquitin-activating enzyme]-L-cysteine + [E2 ubiquitin-conjugating enzyme]-L-cysteine = [E1 ubiquitin-activating enzyme]-L-cysteine + S-ubiquitinyl-[E2 ubiquitin-conjugating enzyme]-L-cysteine.. It functions in the pathway protein modification; protein ubiquitination. Its function is as follows. Accepts the ubiquitin from the E1 complex and catalyzes its covalent attachment to other proteins. Mediates the selective degradation of short-lived and abnormal proteins. The polypeptide is Ubiquitin-conjugating enzyme E2 11 (UBC11) (Arabidopsis thaliana (Mouse-ear cress)).